Here is a 311-residue protein sequence, read N- to C-terminus: tRNA dimethylallyltransferase (311 aa).

13–20 contributes to the ATP binding site; it reads GPTASGKT. 15–20 contacts substrate; that stretch reads TASGKT. Interaction with substrate tRNA regions lie at residues 38 to 41 and 166 to 170; these read DSMQ and QRVLR.

The protein belongs to the IPP transferase family. As to quaternary structure, monomer. The cofactor is Mg(2+).

It catalyses the reaction adenosine(37) in tRNA + dimethylallyl diphosphate = N(6)-dimethylallyladenosine(37) in tRNA + diphosphate. Functionally, catalyzes the transfer of a dimethylallyl group onto the adenine at position 37 in tRNAs that read codons beginning with uridine, leading to the formation of N6-(dimethylallyl)adenosine (i(6)A). This chain is tRNA dimethylallyltransferase, found in Staphylococcus aureus (strain MRSA252).